Consider the following 101-residue polypeptide: Small ribosomal subunit protein bS6 (101 aa).

This sequence belongs to the bacterial ribosomal protein bS6 family.

Functionally, binds together with bS18 to 16S ribosomal RNA. The protein is Small ribosomal subunit protein bS6 of Oleidesulfovibrio alaskensis (strain ATCC BAA-1058 / DSM 17464 / G20) (Desulfovibrio alaskensis).